The sequence spans 475 residues: Ribulose bisphosphate carboxylase large chain (475 aa).

The propeptide occupies 1-2 (MS). N-acetylproline is present on proline 3. The residue at position 14 (lysine 14) is an N6,N6,N6-trimethyllysine. Residues asparagine 123 and threonine 173 each contribute to the substrate site. The Proton acceptor role is filled by lysine 175. Lysine 177 provides a ligand contact to substrate. Positions 201, 203, and 204 each coordinate Mg(2+). Lysine 201 is modified (N6-carboxylysine). Residue histidine 294 is the Proton acceptor of the active site. Arginine 295, histidine 327, and serine 379 together coordinate substrate.

It belongs to the RuBisCO large chain family. Type I subfamily. In terms of assembly, heterohexadecamer of 8 large chains and 8 small chains; disulfide-linked. The disulfide link is formed within the large subunit homodimers. Mg(2+) is required as a cofactor. The disulfide bond which can form in the large chain dimeric partners within the hexadecamer appears to be associated with oxidative stress and protein turnover.

It localises to the plastid. The protein resides in the chloroplast. It carries out the reaction 2 (2R)-3-phosphoglycerate + 2 H(+) = D-ribulose 1,5-bisphosphate + CO2 + H2O. The enzyme catalyses D-ribulose 1,5-bisphosphate + O2 = 2-phosphoglycolate + (2R)-3-phosphoglycerate + 2 H(+). RuBisCO catalyzes two reactions: the carboxylation of D-ribulose 1,5-bisphosphate, the primary event in carbon dioxide fixation, as well as the oxidative fragmentation of the pentose substrate in the photorespiration process. Both reactions occur simultaneously and in competition at the same active site. The polypeptide is Ribulose bisphosphate carboxylase large chain (Cycas taitungensis (Prince sago)).